Consider the following 288-residue polypeptide: MGEFSTLLQQGNGWFFIPSAILLGILHGLEPGHSKTMMAAFIIAIKGTVKQAVMLGLAATLSHTAIVWLIALGGMYLSRAFTAQSVEPWLQLISAIIILSTACWMFWRTWRGEQQWLAGNHHHDHDHGHDHDHDHDHDHDHDHDHDHDHHGHIHPEGATSKAYQDAHERAHAADIQRRFDGQTVTNGQILLFGLTGGLIPCPAAITVLLICIQLKAFTLGATMVLSFSLGLALTLVTVGVGAAISVQQAAKRWSGFSTLARRAPYFSSILIGLVGVYMGIHGYTGIMQ.

The Periplasmic segment spans residues 1–12 (MGEFSTLLQQGN). Residues 13–33 (GWFFIPSAILLGILHGLEPGH) form a helical membrane-spanning segment. Over 34–51 (SKTMMAAFIIAIKGTVKQ) the chain is Cytoplasmic. A helical membrane pass occupies residues 52–72 (AVMLGLAATLSHTAIVWLIAL). The Periplasmic segment spans residues 73 to 85 (GGMYLSRAFTAQS). The helical transmembrane segment at 86–106 (VEPWLQLISAIIILSTACWMF) threads the bilayer. The Cytoplasmic segment spans residues 107 to 188 (WRTWRGEQQW…FDGQTVTNGQ (82 aa)). The span at 123-155 (HDHDHGHDHDHDHDHDHDHDHDHDHDHHGHIHP) shows a compositional bias: basic and acidic residues. The segment at 123–166 (HDHDHGHDHDHDHDHDHDHDHDHDHDHHGHIHPEGATSKAYQDA) is disordered. The chain crosses the membrane as a helical span at residues 189–209 (ILLFGLTGGLIPCPAAITVLL). Residues 210 to 223 (ICIQLKAFTLGATM) lie on the Periplasmic side of the membrane. The chain crosses the membrane as a helical span at residues 224-244 (VLSFSLGLALTLVTVGVGAAI). At 245-265 (SVQQAAKRWSGFSTLARRAPY) the chain is on the cytoplasmic side. Residues 266-286 (FSSILIGLVGVYMGIHGYTGI) traverse the membrane as a helical segment. Topologically, residues 287-288 (MQ) are periplasmic.

It belongs to the NiCoT transporter (TC 2.A.52) family. RcnA subfamily.

It localises to the cell inner membrane. Functionally, efflux system for nickel and cobalt. The chain is Nickel/cobalt efflux system RcnA (rcnA) from Salmonella paratyphi B (strain ATCC BAA-1250 / SPB7).